Here is a 436-residue protein sequence, read N- to C-terminus: Trigger factor (436 aa).

A PPIase FKBP-type domain is found at 161 to 246 (EDQLNIDFVG…VNTVSEPKLP (86 aa)).

Belongs to the FKBP-type PPIase family. Tig subfamily.

The protein localises to the cytoplasm. The catalysed reaction is [protein]-peptidylproline (omega=180) = [protein]-peptidylproline (omega=0). Functionally, involved in protein export. Acts as a chaperone by maintaining the newly synthesized protein in an open conformation. Functions as a peptidyl-prolyl cis-trans isomerase. The polypeptide is Trigger factor (Pseudomonas savastanoi pv. phaseolicola (strain 1448A / Race 6) (Pseudomonas syringae pv. phaseolicola (strain 1448A / Race 6))).